We begin with the raw amino-acid sequence, 500 residues long: Cytochrome P450 11B2, mitochondrial (500 aa).

Residues 1–24 (MALRAKADVWLARPWQCLPRTRAL) constitute a mitochondrion transit peptide. Residue phenylalanine 381 participates in 21-hydroxyprogesterone binding. Residue cysteine 447 coordinates heme.

The protein belongs to the cytochrome P450 family. Heme is required as a cofactor. In terms of tissue distribution, adrenal gland.

It localises to the mitochondrion inner membrane. It catalyses the reaction a steroid + 2 reduced [adrenodoxin] + O2 + 2 H(+) = an 11beta-hydroxysteroid + 2 oxidized [adrenodoxin] + H2O. The enzyme catalyses 21-hydroxyprogesterone + 2 reduced [adrenodoxin] + O2 + 2 H(+) = corticosterone + 2 oxidized [adrenodoxin] + H2O. It carries out the reaction corticosterone + 2 reduced [adrenodoxin] + O2 + 2 H(+) = 18-hydroxycorticosterone + 2 oxidized [adrenodoxin] + H2O. The catalysed reaction is 18-hydroxycorticosterone + 2 reduced [adrenodoxin] + O2 + 2 H(+) = aldosterone + 2 oxidized [adrenodoxin] + 2 H2O. It catalyses the reaction 11-deoxycortisol + 2 reduced [adrenodoxin] + O2 + 2 H(+) = cortisol + 2 oxidized [adrenodoxin] + H2O. The enzyme catalyses 21-hydroxyprogesterone + 2 reduced [adrenodoxin] + O2 + 2 H(+) = 18-hydroxy-11-deoxycorticosterone + 2 oxidized [adrenodoxin] + H2O. It carries out the reaction cortisol + 2 reduced [adrenodoxin] + O2 + 2 H(+) = 18-hydroxycortisol + 2 oxidized [adrenodoxin] + H2O. The catalysed reaction is 18-hydroxycortisol + 2 reduced [adrenodoxin] + O2 + 2 H(+) = 18-oxocortisol + 2 oxidized [adrenodoxin] + 2 H2O. Its pathway is steroid biosynthesis. In terms of biological role, a cytochrome P450 monooxygenase that catalyzes the biosynthesis of aldosterone, the main mineralocorticoid in the human body responsible for salt and water homeostasis, thus involved in blood pressure regulation, arterial hypertension, and the development of heart failure. Catalyzes three sequential oxidative reactions of 11-deoxycorticosterone (21-hydroxyprogesterone), namely 11-beta hydroxylation, followed by two successive oxidations at C18 yielding 18-hydroxy and then 18-oxo intermediates (that would not leave the enzyme active site during the consecutive hydroxylation reactions), ending with the formation of aldosterone. Can also produce 18-hydroxycortisol and 18-oxocortisol, derived from successive oxidations of cortisol at C18, normally found at very low levels, but significantly increased in primary aldosteronism, the most common form of secondary hypertension. Mechanistically, uses molecular oxygen inserting one oxygen atom into a substrate and reducing the second into a water molecule. Two electrons are provided by NADPH via a two-protein mitochondrial transfer system comprising flavoprotein FDXR (adrenodoxin/ferredoxin reductase) and nonheme iron-sulfur protein FDX1 or FDX2 (adrenodoxin/ferredoxin). Could also be involved in the androgen metabolic pathway. This Mesocricetus auratus (Golden hamster) protein is Cytochrome P450 11B2, mitochondrial (CYP11B2).